We begin with the raw amino-acid sequence, 72 residues long: Small ribosomal subunit protein bS18 (72 aa).

The protein belongs to the bacterial ribosomal protein bS18 family. Part of the 30S ribosomal subunit. Forms a tight heterodimer with protein bS6.

Functionally, binds as a heterodimer with protein bS6 to the central domain of the 16S rRNA, where it helps stabilize the platform of the 30S subunit. The sequence is that of Small ribosomal subunit protein bS18 from Trichodesmium erythraeum (strain IMS101).